The primary structure comprises 109 residues: Cell division protein ZapA (109 aa).

A coiled-coil region spans residues 21–99 (PEQQDALNQA…IEQALLEQGR (79 aa)).

Belongs to the ZapA family. Type 1 subfamily. In terms of assembly, homodimer. Interacts with FtsZ.

It is found in the cytoplasm. Functionally, activator of cell division through the inhibition of FtsZ GTPase activity, therefore promoting FtsZ assembly into bundles of protofilaments necessary for the formation of the division Z ring. It is recruited early at mid-cell but it is not essential for cell division. This chain is Cell division protein ZapA, found in Pectobacterium carotovorum subsp. carotovorum (strain PC1).